Reading from the N-terminus, the 56-residue chain is Stable protein 1 (56 aa).

A Stress-response A/B barrel domain is found at 1–44; sequence GYTHAFESTFESKSGLQEYLDSAALAAFAEGFLPTLSQRSFNWG.

The chain is Stable protein 1 from Populus euphratica (Euphrates poplar).